Consider the following 362-residue polypeptide: Serine/threonine-protein kinase SBK2 (362 aa).

Over residues 1 to 11 (MPGKQSEDRPM) the composition is skewed to basic and acidic residues. Residues 1 to 20 (MPGKQSEDRPMEVAAVEDGG) are disordered. The region spanning 62–330 (YEEVRPLGQG…IKSYLGQPWK (269 aa)) is the Protein kinase domain. Residues 68–76 (LGQGRFGRV) and lysine 91 contribute to the ATP site. Aspartate 183 acts as the Proton acceptor in catalysis. A disordered region spans residues 317-362 (PVSSIKSYLGQPWKQREEGAEELTKELREDGSRGGQEAAKGEQPAC). Residues 330-348 (KQREEGAEELTKELREDGS) show a composition bias toward basic and acidic residues.

The protein belongs to the protein kinase superfamily. Ser/Thr protein kinase family. STKL subfamily.

The enzyme catalyses L-seryl-[protein] + ATP = O-phospho-L-seryl-[protein] + ADP + H(+). It catalyses the reaction L-threonyl-[protein] + ATP = O-phospho-L-threonyl-[protein] + ADP + H(+). The polypeptide is Serine/threonine-protein kinase SBK2 (Sbk2) (Rattus norvegicus (Rat)).